The chain runs to 143 residues: Photosystem II extrinsic protein U (143 aa).

A signal peptide spans 1 to 29 (MKRLVGVLMILGLMLTSWGLLGSPQTAIA). The propeptide occupies 30-44 (ASLSPLSFNPSPVLA).

This sequence belongs to the PsbU family. As to quaternary structure, PSII is composed of 1 copy each of membrane proteins PsbA, PsbB, PsbC, PsbD, PsbE, PsbF, PsbH, PsbI, PsbJ, PsbK, PsbL, PsbM, PsbT, PsbX, PsbY, PsbZ, Psb30/Ycf12, peripheral proteins PsbO, CyanoQ (PsbQ), PsbU, PsbV and a large number of cofactors. It forms dimeric complexes.

The protein resides in the cellular thylakoid membrane. One of the extrinsic, lumenal subunits of photosystem II (PSII). PSII is a light-driven water plastoquinone oxidoreductase, using light energy to abstract electrons from H(2)O, generating a proton gradient subsequently used for ATP formation. The extrinsic proteins stabilize the structure of photosystem II oxygen-evolving complex (OEC), the ion environment of oxygen evolution and protect the OEC against heat-induced inactivation. The protein is Photosystem II extrinsic protein U of Leptolyngbya laminosa (Phormidium laminosum).